The chain runs to 340 residues: Anthranilate phosphoribosyltransferase (340 aa).

5-phospho-alpha-D-ribose 1-diphosphate is bound by residues G79, 82–83, S87, 89–92, 107–115, and S119; these read GD, NIST, and KHGNRSVSS. An anthranilate-binding site is contributed by G79. S91 contributes to the Mg(2+) binding site. Position 110 (N110) interacts with anthranilate. R165 is an anthranilate binding site. Mg(2+) is bound by residues D224 and E225.

It belongs to the anthranilate phosphoribosyltransferase family. Homodimer. Mg(2+) serves as cofactor.

The enzyme catalyses N-(5-phospho-beta-D-ribosyl)anthranilate + diphosphate = 5-phospho-alpha-D-ribose 1-diphosphate + anthranilate. Its pathway is amino-acid biosynthesis; L-tryptophan biosynthesis; L-tryptophan from chorismate: step 2/5. In terms of biological role, catalyzes the transfer of the phosphoribosyl group of 5-phosphorylribose-1-pyrophosphate (PRPP) to anthranilate to yield N-(5'-phosphoribosyl)-anthranilate (PRA). The sequence is that of Anthranilate phosphoribosyltransferase from Oceanobacillus iheyensis (strain DSM 14371 / CIP 107618 / JCM 11309 / KCTC 3954 / HTE831).